The primary structure comprises 239 residues: ATP-dependent dethiobiotin synthetase BioD (239 aa).

An ATP-binding site is contributed by 15–20 (EIGKTF). Thr-19 is a Mg(2+) binding site. Lys-40 is a catalytic residue. Residues Asp-57, 118–121 (EGVG), and 178–179 (NH) contribute to the ATP site. Mg(2+)-binding residues include Asp-57 and Glu-118.

This sequence belongs to the dethiobiotin synthetase family. As to quaternary structure, homodimer. Mg(2+) serves as cofactor.

The protein localises to the cytoplasm. The enzyme catalyses (7R,8S)-7,8-diammoniononanoate + CO2 + ATP = (4R,5S)-dethiobiotin + ADP + phosphate + 3 H(+). It functions in the pathway cofactor biosynthesis; biotin biosynthesis; biotin from 7,8-diaminononanoate: step 1/2. In terms of biological role, catalyzes a mechanistically unusual reaction, the ATP-dependent insertion of CO2 between the N7 and N8 nitrogen atoms of 7,8-diaminopelargonic acid (DAPA, also called 7,8-diammoniononanoate) to form a ureido ring. The polypeptide is ATP-dependent dethiobiotin synthetase BioD (Burkholderia multivorans (strain ATCC 17616 / 249)).